A 602-amino-acid chain; its full sequence is Glutamine--fructose-6-phosphate aminotransferase [isomerizing] (602 aa).

Cys-2 (nucleophile; for GATase activity) is an active-site residue. Positions 2 to 217 (CGIVGVVGNT…DQELVIVKAD (216 aa)) constitute a Glutamine amidotransferase type-2 domain. The tract at residues 67-87 (IGHTRWATHGKPTEDNAHPHR) is disordered. Over residues 77 to 87 (KPTEDNAHPHR) the composition is skewed to basic and acidic residues. 2 SIS domains span residues 283–422 (IIKA…ANGN) and 455–592 (VREL…VDKP). Lys-597 serves as the catalytic For Fru-6P isomerization activity.

Homodimer.

The protein resides in the cytoplasm. It catalyses the reaction D-fructose 6-phosphate + L-glutamine = D-glucosamine 6-phosphate + L-glutamate. Catalyzes the first step in hexosamine metabolism, converting fructose-6P into glucosamine-6P using glutamine as a nitrogen source. The sequence is that of Glutamine--fructose-6-phosphate aminotransferase [isomerizing] from Streptococcus pneumoniae (strain ATCC BAA-255 / R6).